A 970-amino-acid chain; its full sequence is Isoleucine--tRNA ligase (970 aa).

The 'HIGH' region motif lies at 65–75 (PYANGHLHIGH). Residue Glu-608 participates in L-isoleucyl-5'-AMP binding. Positions 649-653 (KMSKS) match the 'KMSKS' region motif. Lys-652 serves as a coordination point for ATP. Zn(2+)-binding residues include Cys-943, Cys-946, Cys-962, and Cys-965.

It belongs to the class-I aminoacyl-tRNA synthetase family. IleS type 1 subfamily. Monomer. It depends on Zn(2+) as a cofactor.

Its subcellular location is the cytoplasm. The catalysed reaction is tRNA(Ile) + L-isoleucine + ATP = L-isoleucyl-tRNA(Ile) + AMP + diphosphate. Functionally, catalyzes the attachment of isoleucine to tRNA(Ile). As IleRS can inadvertently accommodate and process structurally similar amino acids such as valine, to avoid such errors it has two additional distinct tRNA(Ile)-dependent editing activities. One activity is designated as 'pretransfer' editing and involves the hydrolysis of activated Val-AMP. The other activity is designated 'posttransfer' editing and involves deacylation of mischarged Val-tRNA(Ile). In Ruegeria pomeroyi (strain ATCC 700808 / DSM 15171 / DSS-3) (Silicibacter pomeroyi), this protein is Isoleucine--tRNA ligase.